An 858-amino-acid polypeptide reads, in one-letter code: DNA mismatch repair protein MutS (858 aa).

An ATP-binding site is contributed by 613–620 (GPNMAGKS).

This sequence belongs to the DNA mismatch repair MutS family.

This protein is involved in the repair of mismatches in DNA. It is possible that it carries out the mismatch recognition step. This protein has a weak ATPase activity. This Dehalococcoides mccartyi (strain ATCC BAA-2266 / KCTC 15142 / 195) (Dehalococcoides ethenogenes (strain 195)) protein is DNA mismatch repair protein MutS.